The chain runs to 857 residues: Protein dalmatian (857 aa).

Disordered regions lie at residues 1–50 (MVRT…KLSI) and 146–194 (VQKS…FFHR). Composition is skewed to polar residues over residues 146–156 (VQKSTQPQNIK) and 165–176 (SPCQQRIRSKSP). Phosphoserine occurs at positions 173, 175, 184, and 222. The span at 251–271 (GKPRAKRTAKKVRPVGNRRKV) shows a compositional bias: basic residues. The interval 251–281 (GKPRAKRTAKKVRPVGNRRKVSTKDNEPEPV) is disordered. S405 carries the post-translational modification Phosphoserine. Disordered regions lie at residues 470–514 (SICP…NAEN) and 737–830 (PPRP…RDIE). The segment covering 771 to 781 (KQPRRTYVKER) has biased composition (basic and acidic residues). Over residues 797–806 (SESEDEDEQD) the composition is skewed to acidic residues. Residues 807–816 (SHDKSLDSPE) show a composition bias toward basic and acidic residues. Residues 817–826 (KKRHHVKRPR) are compositionally biased toward basic residues.

It localises to the nucleus. The protein localises to the chromosome. Regulator of sister chromatid cohesion in mitosis. Probably involved in development of the central nervous system. The protein is Protein dalmatian (dmt) of Drosophila melanogaster (Fruit fly).